The primary structure comprises 359 residues: Insulin gene enhancer protein ISL-2 (359 aa).

2 consecutive LIM zinc-binding domains span residues 25–86 and 87–149; these read AMCV…RLFG and IKCA…LLER. The segment at 151 to 190 is disordered; it reads AAGSPRSPGPLPGARGLHLPDAGSGRQPSLRTHVHKQAEK. 2 positions are modified to phosphoserine: Ser-154 and Ser-157. A DNA-binding region (homeobox) is located at residues 191–250; sequence TTRVRTVLNEKQLHTLRTCYAANPRPDALMKEQLVEMTGLSPRVIRVWFQNKRCKDKKKS. Residues 272-301 are LIM-binding domain (LID); it reads GTPLVAGSPIRHENAVQGSAVEVQTYQPPW. Ser-279 is subject to Phosphoserine. The segment covering 326–336 has biased composition (low complexity); sequence ESGSLGNSSGS. Residues 326–359 are disordered; sequence ESGSLGNSSGSDVTSLSSQLPDTPNSMVPSPVET. The span at 337–359 shows a compositional bias: polar residues; that stretch reads DVTSLSSQLPDTPNSMVPSPVET.

As to quaternary structure, interacts with LHX4.

Its subcellular location is the nucleus. Its function is as follows. Transcriptional factor that defines subclasses of motoneurons that segregate into columns in the spinal cord and select distinct axon pathways. The protein is Insulin gene enhancer protein ISL-2 (Isl2) of Mus musculus (Mouse).